A 223-amino-acid chain; its full sequence is Small ribosomal subunit protein uS3 (223 aa).

One can recognise a KH type-2 domain in the interval 39–108 (IRNFVKKNSY…NILINIVEVK (70 aa)).

The protein belongs to the universal ribosomal protein uS3 family. In terms of assembly, part of the 30S ribosomal subunit. Forms a tight complex with proteins S10 and S14.

Its function is as follows. Binds the lower part of the 30S subunit head. Binds mRNA in the 70S ribosome, positioning it for translation. The protein is Small ribosomal subunit protein uS3 of Clostridium botulinum (strain Kyoto / Type A2).